A 127-amino-acid polypeptide reads, in one-letter code: Prophage antitermination protein Q homolog QuuD (127 aa).

The protein belongs to the phage antitermination Q type 1 family.

In terms of biological role, positively regulate expression of some phage genes. Bacterial host RNA polymerase modified by antitermination proteins transcribes through termination sites that otherwise prevent expression of the regulated genes. The chain is Prophage antitermination protein Q homolog QuuD (quuD) from Escherichia coli (strain K12).